Reading from the N-terminus, the 243-residue chain is Vesicle-associated membrane protein-associated protein B (243 aa).

N-acetylalanine is present on Ala2. At 2 to 218 (AKVEQVLSLE…AALAATGKEE (217 aa)) the chain is on the cytoplasmic side. In terms of domain architecture, MSP spans 7-124 (VLSLEPQHEL…MDSKLRCVFE (118 aa)). At Ser146 the chain carries Phosphoserine. A Glycyl lysine isopeptide (Lys-Gly) (interchain with G-Cter in SUMO1) cross-link involves residue Lys147. Phosphoserine occurs at positions 156 and 159. A coiled-coil region spans residues 161–196 (LDDTEVKKVMEECRRLQGEVQRLREESRQLKEEDGL). Ser206 carries the post-translational modification Phosphoserine. Residues 219–239 (GLSARLLALVVLFFIVGVIIG) form a helical; Anchor for type IV membrane protein membrane-spanning segment.

This sequence belongs to the VAMP-associated protein (VAP) (TC 9.B.17) family. In terms of assembly, homodimer, and heterodimer with VAPA. Interacts with VAMP1 and VAMP2. Interacts (via MSP domain) with ZFYVE27. Interacts with RMDN3. Interacts with KIF5A in a ZFYVE27-dependent manner. Interacts (via MSP domain) with STARD3 (via phospho-FFAT motif). Interacts with STARD3NL (via FFAT motif). Interacts with CERT1. Interacts with PLEKHA3 and SACM1L to form a ternary complex. Interacts with VPS13A (via FFAT motif). Interacts with RB1CC1 (via phosphorylated FFAT motif), MIGA2 (via phosphorylated FFAT motif), RMDN3 (via phosphorylated FFAT motif), OSBPL1A (via FFAT motif), KCNB1 (via phosphorylated FFAT motif) and KCNB2 (via phosphorylated FFAT motif). Interacts (via MSP domain) with WDR44 (via FFAT motif); the interactions connect the endoplasmic reticulum (ER) with the endosomal tubule.

It is found in the endoplasmic reticulum membrane. In terms of biological role, endoplasmic reticulum (ER)-anchored protein that mediates the formation of contact sites between the ER and endosomes via interaction with FFAT motif-containing proteins such as STARD3 or WDR44. Interacts with STARD3 in a FFAT motif phosphorylation dependent manner. Via interaction with WDR44 participates in neosynthesized protein export. Participates in the endoplasmic reticulum unfolded protein response (UPR) by inducing ERN1/IRE1 activity. Involved in cellular calcium homeostasis regulation. This Mus musculus (Mouse) protein is Vesicle-associated membrane protein-associated protein B.